The following is a 570-amino-acid chain: DNA polymerase/3'-5' exonuclease PolX (570 aa).

The segment at 1 to 315 is DNA polymerase type-X; the sequence is MHKKDIIRLL…PLIPPEIRES (315 aa). 3 residues coordinate a divalent metal cation: Asp-193, Asp-195, and Asp-240. A 3'-5' exonuclease region spans residues 333–570; the sequence is QIKGDLHMHS…DVEAFLKRND (238 aa). 8 residues coordinate Mn(2+): His-339, His-341, His-371, Glu-410, His-437, His-465, Asp-526, and His-528.

This sequence in the N-terminal section; belongs to the DNA polymerase type-X family. It in the C-terminal section; belongs to the PHP family. As to quaternary structure, monomer. Mn(2+) is required as a cofactor. It depends on Mg(2+) as a cofactor.

The catalysed reaction is DNA(n) + a 2'-deoxyribonucleoside 5'-triphosphate = DNA(n+1) + diphosphate. The enzyme catalyses Exonucleolytic cleavage in the 3'- to 5'-direction to yield nucleoside 5'-phosphates.. With respect to regulation, the polymerization activity is inhibited in the presence of 2'-3'-dideoxynucleoside 5'-triphosphate (ddNTP). Its function is as follows. Strictly DNA-template-directed DNA polymerase, preferentially acting on DNA structures containing gaps from one to a few nucleotides and bearing a phosphate group at the 5' end of the downstream DNA. The fact that PolX is able to conduct filling of a single-nucleotide gap, allowing further sealing of the resulting nick by a DNA ligase, points to a putative role in base excision repair (BER) during the B.subtilis life cycle. Moreover, also possesses a 3'-5' exonuclease activity able to edit unpaired 3'-termini in a gapped DNA substrate and likely involved in resecting unannealed 3'-termini during DNA repair. The same PolX molecule could perform the subsequent gap-filling step. Does not display 5'-deoxyribose 5'-phosphate (dRP) lyase activity, as predicted by the lack of the lysine and tyrosine residues responsible for the dRP lyase activity in some other PolX members. This chain is DNA polymerase/3'-5' exonuclease PolX (polX), found in Bacillus subtilis (strain 168).